Consider the following 186-residue polypeptide: MEEERRLRGRLSRRRPPAGGGPPNCRPWFLSEGSKSEPWAALLRSTVSGTADWTPNRQPLPPLPAFPSQESLPDPESTVPPEAFTVGSKTFSWTPLPPALRGSGSSRHLFCEPEGSLGSPTPSLKGCPALNSGRTPSAQECVPVQSPLALLSCPLCQKAFDPKLTQLDVDSHLAQCLAECTEDVVW.

2 disordered regions span residues M1 to L30 and T50 to T90. Residues L7–P16 show a composition bias toward basic residues. Position 119 is a phosphoserine (S119). The segment at L150–W186 adopts a UBZ2-type zinc-finger fold. The Zn(2+) site is built by C153, C156, H172, and C176.

Component of the Fanconi anemia (FA) complex. Interacts with FANCA; interaction is direct. Interacts with REV1.

It is found in the nucleus. The protein localises to the chromosome. Functionally, component of the Fanconi anemia (FA) complex required to recruit the FA complex to DNA interstrand cross-links (ICLs) and promote ICLs repair. Following DNA damage recognizes and binds 'Lys-63'-linked ubiquitin generated by RNF8 at ICLs and recruits other components of the FA complex. Promotes translesion synthesis via interaction with REV1. The protein is Fanconi anemia core complex-associated protein 20 of Mus musculus (Mouse).